The sequence spans 1183 residues: Translation initiation factor IF-2 (1183 aa).

Disordered stretches follow at residues 55 to 512 (KSKT…KVHI) and 538 to 574 (ASLARPSKPKVGKRNNGKPLTALKKRKKETTRQRQRR). Residues 83-99 (TQKDQKTEPKKKNHDQT) show a composition bias toward basic and acidic residues. 2 stretches are compositionally biased toward polar residues: residues 100 to 143 (ELSQ…QITA) and 165 to 177 (KPLTQAESTIPQS). Residues 220 to 229 (PKIDIQDKKP) are compositionally biased toward basic and acidic residues. A compositionally biased stretch (polar residues) spans 231–252 (QPNNQKAKTRINQGEISPQKVG). Residues 253–267 (QGNIQKIKSQNKQNQ) are compositionally biased toward low complexity. Basic and acidic residues predominate over residues 288-304 (IRREKPVNKPHTNEVRN). Composition is skewed to polar residues over residues 324 to 349 (QGLSNRPGSNNKIGGTGRPGSQNRQG) and 357 to 367 (NRTTQGQNRPG). The span at 485-499 (GRPDWDDSAKLDALR) shows a compositional bias: basic and acidic residues. Basic residues-rich tracts occupy residues 544–553 (SKPKVGKRNN) and 560–574 (LKKRKKETTRQRQRR). The region spanning 675–847 (RRPPVVTVMG…VLLVTEVEDL (173 aa)) is the tr-type G domain. The G1 stretch occupies residues 684-691 (GHVDHGKT). 684–691 (GHVDHGKT) lines the GTP pocket. The segment at 709–713 (GITQH) is G2. A G3 region spans residues 734 to 737 (DTPG). GTP contacts are provided by residues 734-738 (DTPGH) and 788-791 (NKID). Residues 788–791 (NKID) are G4. Residues 824–826 (SAI) are G5.

This sequence belongs to the TRAFAC class translation factor GTPase superfamily. Classic translation factor GTPase family. IF-2 subfamily.

The protein resides in the cytoplasm. Its function is as follows. One of the essential components for the initiation of protein synthesis. Protects formylmethionyl-tRNA from spontaneous hydrolysis and promotes its binding to the 30S ribosomal subunits. Also involved in the hydrolysis of GTP during the formation of the 70S ribosomal complex. The polypeptide is Translation initiation factor IF-2 (Prochlorococcus marinus (strain NATL1A)).